The sequence spans 136 residues: Holo-[acyl-carrier-protein] synthase (136 aa).

Residues aspartate 8 and glutamate 62 each contribute to the Mg(2+) site.

Belongs to the P-Pant transferase superfamily. AcpS family. The cofactor is Mg(2+).

The protein localises to the cytoplasm. The catalysed reaction is apo-[ACP] + CoA = holo-[ACP] + adenosine 3',5'-bisphosphate + H(+). Transfers the 4'-phosphopantetheine moiety from coenzyme A to a Ser of acyl-carrier-protein. The protein is Holo-[acyl-carrier-protein] synthase of Polynucleobacter necessarius subsp. necessarius (strain STIR1).